Here is a 243-residue protein sequence, read N- to C-terminus: E3 ubiquitin-protein ligase RMA3 (243 aa).

An RING-type zinc finger spans residues 44 to 92 (CNICLDTAHDPVVTLCGHLFCWPCIYKWLHVQLSSVSVDQHQNNCPVCK). The interval 110-135 (SPSSTFGSKKQDALSTDIPRRPAPSA) is disordered. The helical; Anchor for type IV membrane protein transmembrane segment at 223–243 (KSLNRVSIFFLCCIILCLLLF) threads the bilayer.

As to expression, ubiquitous. Highly expressed in roots.

The protein resides in the endoplasmic reticulum membrane. It carries out the reaction S-ubiquitinyl-[E2 ubiquitin-conjugating enzyme]-L-cysteine + [acceptor protein]-L-lysine = [E2 ubiquitin-conjugating enzyme]-L-cysteine + N(6)-ubiquitinyl-[acceptor protein]-L-lysine.. It functions in the pathway protein modification; protein ubiquitination. E3 ubiquitin-protein ligase. In Arabidopsis thaliana (Mouse-ear cress), this protein is E3 ubiquitin-protein ligase RMA3 (RMA3).